Reading from the N-terminus, the 89-residue chain is Small ribosomal subunit protein uS17 (89 aa).

This sequence belongs to the universal ribosomal protein uS17 family. As to quaternary structure, part of the 30S ribosomal subunit.

Its function is as follows. One of the primary rRNA binding proteins, it binds specifically to the 5'-end of 16S ribosomal RNA. The protein is Small ribosomal subunit protein uS17 of Xanthomonas campestris pv. campestris (strain B100).